Consider the following 1106-residue polypeptide: Putative pre-mRNA-splicing factor ATP-dependent RNA helicase DHX16 (1106 aa).

3 disordered regions span residues 73-100 (KIQN…DKEK), 120-286 (DDIV…TKSR), and 366-394 (YIND…WEQN). The span at 78–94 (TSSSSSSSSTSLSSSSS) shows a compositional bias: low complexity. Over residues 138 to 155 (KRKKKEKKKEKKDKKDKK) the composition is skewed to basic residues. The segment covering 156-167 (DKKSSTRKKSDN) has biased composition (basic and acidic residues). A compositionally biased stretch (low complexity) spans 189 to 201 (NNENNDNNNDNNN). The span at 232-283 (REQREVKELSDRIKKRDEKSTKKKIVDDSETKESIERKNRLEQNEQLETERT) shows a compositional bias: basic and acidic residues. Positions 477–640 (IDAVREYQVL…FDGAPTFNIP (164 aa)) constitute a Helicase ATP-binding domain. Residue 490-497 (GETGSGKT) participates in ATP binding. A DEAH box motif is present at residues 587–590 (DEAH). In terms of domain architecture, Helicase C-terminal spans 665–838 (TVLQIHITEP…NVVLLLKSMG (174 aa)).

It belongs to the DEAD box helicase family. DEAH subfamily. DDX16/PRP8 sub-subfamily. As to quaternary structure, component of pre-catalytic spliceosome complexes.

It is found in the nucleus. It localises to the nucleoplasm. The enzyme catalyses ATP + H2O = ADP + phosphate + H(+). Functionally, required for pre-mRNA splicing as component of the spliceosome. Contributes to pre-mRNA splicing after spliceosome formation and prior to the first transesterification reaction. This chain is Putative pre-mRNA-splicing factor ATP-dependent RNA helicase DHX16 (dhx16), found in Dictyostelium discoideum (Social amoeba).